The sequence spans 329 residues: Glycerol-3-phosphate dehydrogenase [NAD(P)+] (329 aa).

Positions 13, 14, 34, and 105 each coordinate NADPH. Residues K105, G134, and S136 each contribute to the sn-glycerol 3-phosphate site. Residue A138 participates in NADPH binding. Positions 189, 242, 252, 253, and 254 each coordinate sn-glycerol 3-phosphate. K189 serves as the catalytic Proton acceptor. NADPH is bound at residue R253. NADPH contacts are provided by V277 and E279.

The protein belongs to the NAD-dependent glycerol-3-phosphate dehydrogenase family.

The protein resides in the cytoplasm. It carries out the reaction sn-glycerol 3-phosphate + NAD(+) = dihydroxyacetone phosphate + NADH + H(+). The catalysed reaction is sn-glycerol 3-phosphate + NADP(+) = dihydroxyacetone phosphate + NADPH + H(+). Its pathway is membrane lipid metabolism; glycerophospholipid metabolism. Functionally, catalyzes the reduction of the glycolytic intermediate dihydroxyacetone phosphate (DHAP) to sn-glycerol 3-phosphate (G3P), the key precursor for phospholipid synthesis. The chain is Glycerol-3-phosphate dehydrogenase [NAD(P)+] from Legionella pneumophila (strain Corby).